Here is a 196-residue protein sequence, read N- to C-terminus: APGW-amide-related neuropeptide (196 aa).

The first 22 residues, 1–22, serve as a signal peptide directing secretion; that stretch reads METLNIFLVIFSLLGTIIIASS. Positions 23–48 are excised as a propeptide; the sequence is SDESSERKKRDLDTIDDTNNDFLTAD. At W54 the chain carries Tryptophan amide. A propeptide spanning residues 58 to 68 is cleaved from the precursor; the sequence is SFDDDILNNLD. The residue at position 74 (W74) is a Tryptophan amide. A propeptide spanning residues 78–88 is cleaved from the precursor; that stretch reads SDMLFDSEEIE. W94 carries the post-translational modification Tryptophan amide. Positions 98 to 105 are excised as a propeptide; it reads SSSLYDDE. W111 bears the Tryptophan amide mark. Residues 115-129 constitute a propeptide that is removed on maturation; it reads SSALLDDLSLYNSIV. Position 135 is a tryptophan amide (W135). Positions 139–146 are excised as a propeptide; that stretch reads SDTFKVDI. 2 positions are modified to tryptophan amide: W151 and W158. Residues 162–196 constitute a propeptide that is removed on maturation; sequence SGPNMCMDFQDEILQLYKLLNEAEKLHSECEALNI.

As to expression, expressed in cerebral, pedal and visceral ganglia. TPGW-amide is found in pedal and cerebral ganglia and in shell adductor muscle (at protein level). RPGW-amide and KPGW-amide are found in pedal retractor muscle, ABRM and shell adductor muscle (at protein level).

In terms of biological role, RPGW-amide, KPGW-amide and TPGW-amide tetrapeptides are involved in control of muscle contraction and may function as neurotransmitters. These peptides increase tension of the pedal retractor muscle and, in conjunction with FMRF-amide, increase peak tension of the anterior byssus retractor muscle (ABRM). The chain is APGW-amide-related neuropeptide from Mytilus edulis (Blue mussel).